Consider the following 212-residue polypeptide: Adenylate kinase (212 aa).

10–15 provides a ligand contact to ATP; sequence GAGKGT. Residues 30–59 are NMP; that stretch reads STGDMFRAAMANQTEMGRLAKSYIDKGELV. Residues T31, R36, 57 to 59, 86 to 89, and Q93 contribute to the AMP site; these read ELV and GYPR. Positions 127 to 159 are LID; the sequence is GRIINRKTGETFHKVFNPPVDYKEEDYYQREDD. Residues R128 and 137–138 contribute to the ATP site; that span reads TF. R156 and R167 together coordinate AMP. Q195 provides a ligand contact to ATP.

As to quaternary structure, monomer.

Its subcellular location is the cytoplasm. It carries out the reaction AMP + ATP = 2 ADP. Its pathway is purine metabolism; AMP biosynthesis via salvage pathway; AMP from ADP: step 1/1. In terms of biological role, catalyzes the reversible transfer of the terminal phosphate group between ATP and AMP. Plays an important role in cellular energy homeostasis and in adenine nucleotide metabolism. The chain is Adenylate kinase from Streptococcus pyogenes serotype M6 (strain ATCC BAA-946 / MGAS10394).